The chain runs to 415 residues: Actin-like protein 7B (415 aa).

The interval 1–35 (MATRNSPMALGTAQGDPGEAGTRPGSDAGLRDTGA) is disordered. Ser6 is subject to Phosphoserine.

Belongs to the actin family.

It localises to the cytoplasm. It is found in the cytoskeleton. The protein is Actin-like protein 7B (ACTL7B) of Macaca fascicularis (Crab-eating macaque).